We begin with the raw amino-acid sequence, 217 residues long: MLNISIAIDGPAGAGKSTIAKIIGNKLNIMYINTGSMYRAVTLMALKNNIEPSDIESLKTLINSMDISFNGNNIIVNGKDLEEAIRMPIINNNVSKYAAVEEVRELLVSMQQNISQKYNVVMDGRDIGTVVLKDAPYKFFITASAEVRAKRRLKELKEKKINISFQDVLKEIKERDYIDSNRKVNPLKQSKDAILIDTSNFTIEEVVDKICSIIKRD.

10–18 (GPAGAGKST) lines the ATP pocket.

It belongs to the cytidylate kinase family. Type 1 subfamily.

The protein localises to the cytoplasm. It catalyses the reaction CMP + ATP = CDP + ADP. It carries out the reaction dCMP + ATP = dCDP + ADP. The chain is Cytidylate kinase from Clostridium botulinum (strain Loch Maree / Type A3).